Here is a 297-residue protein sequence, read N- to C-terminus: N-acetylneuraminate lyase (297 aa).

Aceneuramate-binding residues include serine 47 and threonine 48. Catalysis depends on tyrosine 137, which acts as the Proton donor. The active-site Schiff-base intermediate with substrate is lysine 165. Positions 167, 189, 191, 192, and 208 each coordinate aceneuramate.

It belongs to the DapA family. NanA subfamily. In terms of assembly, homotetramer.

The protein resides in the cytoplasm. It carries out the reaction aceneuramate = aldehydo-N-acetyl-D-mannosamine + pyruvate. Its pathway is amino-sugar metabolism; N-acetylneuraminate degradation; D-fructose 6-phosphate from N-acetylneuraminate: step 1/5. Functionally, catalyzes the reversible aldol cleavage of N-acetylneuraminic acid (sialic acid; Neu5Ac) to form pyruvate and N-acetylmannosamine (ManNAc) via a Schiff base intermediate. This is N-acetylneuraminate lyase from Shigella boydii serotype 4 (strain Sb227).